The following is an 876-amino-acid chain: MSKSTAEIRQAFLDFFHSKGHQVVASSSLVPHNDPTLLFTNAGMNQFKDVFLGLDKRNYSRATTSQRCVRAGGKHNDLENVGYTARHHTFFEMLGNFSFGDYFKHDAIQFAWELLTSEKWFALPKERLWVTVYESDDEAYEIWEKEVGIPRERIIRIGDNKGAPYASDNFWQMGDTGPCGPCTEIFYDHGDHIWGGPPGSPEEDGDRYIEIWNIVFMQFNRQADGTMEPLPKPSVDTGMGLERIAAVLQHVNSNYDIDLFRTLIQAVAKVTGATDLSNKSLRVIADHIRSCAFLIADGVMPSNENRGYVLRRIIRRAVRHGNMLGAKETFFYKLVGPLIDVMGSAGEDLKRQQAQVEQVLKTEEEQFARTLERGLALLDEELAKLSGDTLDGETAFRLYDTYGFPVDLTADVCRERNIKVDEAGFEAAMEEQRRRAREASGFGADYNAMIRVDSASEFKGYDHLELNGKVTALFVDGKAVDAINAGQEAVVVLDQTPFYAESGGQVGDKGELKDANFSFAVEDTQKYGQAIGHIGKLAAGSLKVGDAVQADVDEARRARIRLNHSATHLMHAALRQVLGTHVSQKGSLVNDKVLRFDFSHNEAMKPEEIRAVEDLVNAQIRRNLPIETNIMDLEAAKAKGAMALFGEKYDERVRVLSMGDFSTELCGGTHASRTGDIGLFRIISESGTAAGVRRIEAVTGEGAITTVHADSDRLSEVAHLLKGDSNNLADKVRSVLERTRQLEKELQQLKEQAAAQESANLSSKAIDVNGVKLLVSELSGVEPKMLRTMVDDLKNQLGSTIIVLATVAEGKVSLIAGVSKDVTDRVKAGELIGMVAQQVGGKGGGRPDMAQAGGTDAAALPAALASVKGWVSAKLQ.

N6-acetyllysine is present on Lys-74. Residues His-564, His-568, Cys-666, and His-670 each contribute to the Zn(2+) site.

This sequence belongs to the class-II aminoacyl-tRNA synthetase family. In terms of assembly, homotetramer. It depends on Zn(2+) as a cofactor.

The protein resides in the cytoplasm. The enzyme catalyses tRNA(Ala) + L-alanine + ATP = L-alanyl-tRNA(Ala) + AMP + diphosphate. Catalyzes the attachment of alanine to tRNA(Ala) in a two-step reaction: alanine is first activated by ATP to form Ala-AMP and then transferred to the acceptor end of tRNA(Ala). Also edits incorrectly charged Ser-tRNA(Ala) and Gly-tRNA(Ala) via its editing domain. This is Alanine--tRNA ligase from Shigella boydii serotype 4 (strain Sb227).